Here is a 268-residue protein sequence, read N- to C-terminus: uncharacterized protein (268 aa).

4 helical membrane passes run 32 to 52, 70 to 90, 125 to 145, and 237 to 257; these read SLLL…IFFI, VFVG…AFLF, GVSS…FYIF, and IKYI…AYLT.

Belongs to the CbiQ family.

The protein resides in the cell membrane. This is an uncharacterized protein from Methanocaldococcus jannaschii (strain ATCC 43067 / DSM 2661 / JAL-1 / JCM 10045 / NBRC 100440) (Methanococcus jannaschii).